We begin with the raw amino-acid sequence, 275 residues long: Maltoporin (275 aa).

It belongs to the porin LamB (TC 1.B.3) family. In terms of assembly, homotrimer formed of three 18-stranded antiparallel beta-barrels, containing three independent channels.

It is found in the cell outer membrane. It carries out the reaction beta-maltose(in) = beta-maltose(out). In terms of biological role, involved in the transport of maltose and maltodextrins. In Vibrio parahaemolyticus, this protein is Maltoporin (lamB).